Here is a 404-residue protein sequence, read N- to C-terminus: Sodium/glutamate symporter (404 aa).

Helical transmembrane passes span 5 to 25 (FSTY…YFLV), 33 to 53 (TFNI…LLIW), 69 to 89 (TTMM…SRLI), 95 to 115 (LVVF…IGIA), 161 to 181 (IAIA…GPVA), 219 to 239 (SLIE…YLDV), 245 to 265 (ALQL…RNIL), 277 to 297 (AIDV…LMSL), 307 to 327 (IDVL…AIFI), 338 to 358 (AVVL…TAIA), and 373 to 393 (AFLI…AALL).

Belongs to the glutamate:Na(+) symporter (ESS) (TC 2.A.27) family.

The protein resides in the cell inner membrane. Functionally, catalyzes the sodium-dependent transport of glutamate. This chain is Sodium/glutamate symporter, found in Haemophilus influenzae (strain ATCC 51907 / DSM 11121 / KW20 / Rd).